Here is a 490-residue protein sequence, read N- to C-terminus: GTPase Der (490 aa).

2 EngA-type G domains span residues 3 to 166 and 203 to 376; these read PVVA…MEDL and IKLA…DSST. Residues 9 to 16, 56 to 60, 118 to 121, 209 to 216, 256 to 260, and 321 to 324 contribute to the GTP site; these read GRPNVGKS, DTGGI, NKTD, DTAGV, and NKWD. Residues 377 to 461 enclose the KH-like domain; the sequence is RRVGTSMLTR…PIRIQFKEGE (85 aa).

It belongs to the TRAFAC class TrmE-Era-EngA-EngB-Septin-like GTPase superfamily. EngA (Der) GTPase family. In terms of assembly, associates with the 50S ribosomal subunit.

Functionally, GTPase that plays an essential role in the late steps of ribosome biogenesis. This chain is GTPase Der, found in Escherichia coli O157:H7.